A 171-amino-acid polypeptide reads, in one-letter code: Ribosome maturation factor RimP (171 aa).

The protein belongs to the RimP family.

Its subcellular location is the cytoplasm. Required for maturation of 30S ribosomal subunits. The polypeptide is Ribosome maturation factor RimP (Anaeromyxobacter dehalogenans (strain 2CP-1 / ATCC BAA-258)).